A 469-amino-acid chain; its full sequence is ATP-dependent protease ATPase subunit HslU (469 aa).

Residues isoleucine 24, 66 to 71 (GVGKTE), aspartate 282, glutamate 347, and arginine 419 each bind ATP.

It belongs to the ClpX chaperone family. HslU subfamily. In terms of assembly, a double ring-shaped homohexamer of HslV is capped on each side by a ring-shaped HslU homohexamer. The assembly of the HslU/HslV complex is dependent on binding of ATP.

Its subcellular location is the cytoplasm. Its function is as follows. ATPase subunit of a proteasome-like degradation complex; this subunit has chaperone activity. The binding of ATP and its subsequent hydrolysis by HslU are essential for unfolding of protein substrates subsequently hydrolyzed by HslV. HslU recognizes the N-terminal part of its protein substrates and unfolds these before they are guided to HslV for hydrolysis. This Listeria welshimeri serovar 6b (strain ATCC 35897 / DSM 20650 / CCUG 15529 / CIP 8149 / NCTC 11857 / SLCC 5334 / V8) protein is ATP-dependent protease ATPase subunit HslU.